We begin with the raw amino-acid sequence, 372 residues long: Citrate synthase 2 (372 aa).

His257 is a catalytic residue. Ser284 carries the phosphoserine modification. Asp308 is an active-site residue.

This sequence belongs to the citrate synthase family. In terms of assembly, homodimer.

The catalysed reaction is oxaloacetate + acetyl-CoA + H2O = citrate + CoA + H(+). Its pathway is carbohydrate metabolism; tricarboxylic acid cycle; isocitrate from oxaloacetate: step 1/2. Functionally, might regulate the synthesis and function of enzymes involved in later enzymatic steps of Krebs cycle. Loss in activity results in sporulation defect. The polypeptide is Citrate synthase 2 (citZ) (Bacillus subtilis (strain 168)).